A 172-amino-acid chain; its full sequence is Ribosome maturation factor RimM (172 aa).

One can recognise a PRC barrel domain in the interval 96–168; the sequence is EGEFYYHQII…RVDVELMEGL (73 aa).

It belongs to the RimM family. As to quaternary structure, binds ribosomal protein uS19.

Its subcellular location is the cytoplasm. In terms of biological role, an accessory protein needed during the final step in the assembly of 30S ribosomal subunit, possibly for assembly of the head region. Essential for efficient processing of 16S rRNA. May be needed both before and after RbfA during the maturation of 16S rRNA. It has affinity for free ribosomal 30S subunits but not for 70S ribosomes. The protein is Ribosome maturation factor RimM of Streptococcus pyogenes serotype M1.